Consider the following 98-residue polypeptide: MTSTNFRPLHDRVVVRRVESEAKTKGGIIIPDTAKEKPQEGEIVAVGSGARDEAGKVVALDVKVGDRVLFGKWSGTEVKLDGEDLLIMKEADIMGIIG.

The protein belongs to the GroES chaperonin family. Heptamer of 7 subunits arranged in a ring. Interacts with the chaperonin GroEL.

The protein localises to the cytoplasm. Its function is as follows. Together with the chaperonin GroEL, plays an essential role in assisting protein folding. The GroEL-GroES system forms a nano-cage that allows encapsulation of the non-native substrate proteins and provides a physical environment optimized to promote and accelerate protein folding. GroES binds to the apical surface of the GroEL ring, thereby capping the opening of the GroEL channel. The sequence is that of Co-chaperonin GroES from Agrobacterium fabrum (strain C58 / ATCC 33970) (Agrobacterium tumefaciens (strain C58)).